The chain runs to 750 residues: Tegument protein UL46 homolog (750 aa).

Disordered regions lie at residues Phe437–Thr484, Gln525–Arg593, Tyr610–Tyr669, and Ser692–Leu750. Residues Leu465–Thr484 are compositionally biased toward polar residues. A compositionally biased stretch (low complexity) spans Asp528–Thr540. The segment covering Glu541 to Pro553 has biased composition (polar residues). Composition is skewed to basic and acidic residues over residues Val710–Ile727 and Lys739–Leu750.

The protein belongs to the herpesviridae HHV-1 VP11/12 protein family.

The protein localises to the virion tegument. It localises to the host cell membrane. Functionally, modulates alpha trans-inducing factor-dependent activation of alpha genes. The chain is Tegument protein UL46 homolog from Equine herpesvirus 1 (strain V592) (EHV-1).